The following is a 256-amino-acid chain: Alcohol dehydrogenase (256 aa).

S2 is subject to N-acetylserine. Residues 12 to 41 (FVAG…LDRI) and D65 each bind NAD(+). A substrate-binding site is contributed by S140. Catalysis depends on Y153, which acts as the Proton acceptor. K157 contributes to the NAD(+) binding site.

Belongs to the short-chain dehydrogenases/reductases (SDR) family. In terms of assembly, homodimer.

It carries out the reaction a primary alcohol + NAD(+) = an aldehyde + NADH + H(+). The catalysed reaction is a secondary alcohol + NAD(+) = a ketone + NADH + H(+). Its activity is regulated as follows. Inhibited by 2,2,2-trifluoroethanol and pyrazole. The protein is Alcohol dehydrogenase (Adh) of Drosophila melanogaster (Fruit fly).